Consider the following 473-residue polypeptide: Bifunctional protein HldE (473 aa).

The tract at residues 1–318 is ribokinase; it reads MKLSMPRFDQ…RAIQREEGSE (318 aa). 194 to 197 contributes to the ATP binding site; the sequence is NLSE. Residue Asp-263 is part of the active site. The tract at residues 343–473 is cytidylyltransferase; sequence FTNGCFDILH…TAIVEKIRKN (131 aa).

This sequence in the N-terminal section; belongs to the carbohydrate kinase PfkB family. The protein in the C-terminal section; belongs to the cytidylyltransferase family. Homodimer.

It carries out the reaction D-glycero-beta-D-manno-heptose 7-phosphate + ATP = D-glycero-beta-D-manno-heptose 1,7-bisphosphate + ADP + H(+). It catalyses the reaction D-glycero-beta-D-manno-heptose 1-phosphate + ATP + H(+) = ADP-D-glycero-beta-D-manno-heptose + diphosphate. The protein operates within nucleotide-sugar biosynthesis; ADP-L-glycero-beta-D-manno-heptose biosynthesis; ADP-L-glycero-beta-D-manno-heptose from D-glycero-beta-D-manno-heptose 7-phosphate: step 1/4. It participates in nucleotide-sugar biosynthesis; ADP-L-glycero-beta-D-manno-heptose biosynthesis; ADP-L-glycero-beta-D-manno-heptose from D-glycero-beta-D-manno-heptose 7-phosphate: step 3/4. Its function is as follows. Catalyzes the phosphorylation of D-glycero-D-manno-heptose 7-phosphate at the C-1 position to selectively form D-glycero-beta-D-manno-heptose-1,7-bisphosphate. In terms of biological role, catalyzes the ADP transfer from ATP to D-glycero-beta-D-manno-heptose 1-phosphate, yielding ADP-D-glycero-beta-D-manno-heptose. The sequence is that of Bifunctional protein HldE from Pseudomonas putida (strain ATCC 47054 / DSM 6125 / CFBP 8728 / NCIMB 11950 / KT2440).